The primary structure comprises 88 residues: Phosphocarrier protein HPr (88 aa).

The HPr domain maps to 1–88 (MEKREFNIIA…DTMKKEGLAE (88 aa)). Catalysis depends on H15, which acts as the Pros-phosphohistidine intermediate. S46 bears the Phosphoserine; by HPrK/P mark.

This sequence belongs to the HPr family.

The protein resides in the cytoplasm. With respect to regulation, phosphorylation on Ser-46 inhibits the phosphoryl transfer from enzyme I to HPr. Functionally, general (non sugar-specific) component of the phosphoenolpyruvate-dependent sugar phosphotransferase system (sugar PTS). This major carbohydrate active-transport system catalyzes the phosphorylation of incoming sugar substrates concomitantly with their translocation across the cell membrane. The phosphoryl group from phosphoenolpyruvate (PEP) is transferred to the phosphoryl carrier protein HPr by enzyme I. Phospho-HPr then transfers it to the PTS EIIA domain. Its function is as follows. P-Ser-HPr interacts with the catabolite control protein A (CcpA), forming a complex that binds to DNA at the catabolite response elements cre, operator sites preceding a large number of catabolite-regulated genes. Thus, P-Ser-HPr is a corepressor in carbon catabolite repression (CCR), a mechanism that allows bacteria to coordinate and optimize the utilization of available carbon sources. P-Ser-HPr also plays a role in inducer exclusion, in which it probably interacts with several non-PTS permeases and inhibits their transport activity. This Lacticaseibacillus casei (Lactobacillus casei) protein is Phosphocarrier protein HPr (ptsH).